We begin with the raw amino-acid sequence, 938 residues long: Isoleucine--tRNA ligase (938 aa).

The 'HIGH' region signature appears at 58-68 (PYANGSIHIGH). Lys-183 is subject to N6-acetyllysine. Glu-561 lines the L-isoleucyl-5'-AMP pocket. Residues 602–606 (KMSKS) carry the 'KMSKS' region motif. Lys-605 is a binding site for ATP. Zn(2+) contacts are provided by Cys-901, Cys-904, Cys-921, and Cys-924.

This sequence belongs to the class-I aminoacyl-tRNA synthetase family. IleS type 1 subfamily. As to quaternary structure, monomer. Zn(2+) is required as a cofactor.

Its subcellular location is the cytoplasm. It carries out the reaction tRNA(Ile) + L-isoleucine + ATP = L-isoleucyl-tRNA(Ile) + AMP + diphosphate. In terms of biological role, catalyzes the attachment of isoleucine to tRNA(Ile). As IleRS can inadvertently accommodate and process structurally similar amino acids such as valine, to avoid such errors it has two additional distinct tRNA(Ile)-dependent editing activities. One activity is designated as 'pretransfer' editing and involves the hydrolysis of activated Val-AMP. The other activity is designated 'posttransfer' editing and involves deacylation of mischarged Val-tRNA(Ile). This chain is Isoleucine--tRNA ligase, found in Escherichia coli O6:K15:H31 (strain 536 / UPEC).